The following is a 1320-amino-acid chain: Probable inactive ATP-dependent zinc metalloprotease FTSHI 5, chloroplastic (1320 aa).

The transit peptide at 1-43 (MDFISASSLSSPFSTQLSPIYLSSGIVSLKPRHRVKNRNFGSR) directs the protein to the chloroplast. Transmembrane regions (helical) follow at residues 571 to 591 (LYLK…WIPM), 633 to 653 (NIND…IIPY), and 695 to 715 (FQWF…LYHV). ATP is bound at residue 824–831 (GERGTGKT).

It in the N-terminal section; belongs to the AAA ATPase family. This sequence in the C-terminal section; belongs to the peptidase M41 family. As to quaternary structure, oligomer.

The protein localises to the plastid. It localises to the chloroplast membrane. Functionally, required for plastid development during embryogenesis. Might be involved in chaperone functions or play a structural role in the thylakoid FtsH complex. This Arabidopsis thaliana (Mouse-ear cress) protein is Probable inactive ATP-dependent zinc metalloprotease FTSHI 5, chloroplastic.